The chain runs to 109 residues: RNA-binding protein Hfq (109 aa).

Positions 9-68 constitute a Sm domain; the sequence is DPFLNALRKEKVNVSVYLVNGIKLQGQVEAFDQFCIVLRNTVNQMVYKHAISTIVPAKSV. The interval 77 to 109 is disordered; sequence PYHQNSNDEQDENVDDIHSDDLEIQENEGNIHE.

This sequence belongs to the Hfq family. As to quaternary structure, homohexamer.

RNA chaperone that binds small regulatory RNA (sRNAs) and mRNAs to facilitate mRNA translational regulation in response to envelope stress, environmental stress and changes in metabolite concentrations. Also binds with high specificity to tRNAs. The chain is RNA-binding protein Hfq from Francisella tularensis subsp. mediasiatica (strain FSC147).